The chain runs to 118 residues: Large ribosomal subunit protein bL20 (118 aa).

It belongs to the bacterial ribosomal protein bL20 family. Part of the 50S ribosomal subunit. Contacts proteins L13 and L21.

Binds directly to 23S rRNA, probably serving to organize its structure. This Deinococcus radiodurans (strain ATCC 13939 / DSM 20539 / JCM 16871 / CCUG 27074 / LMG 4051 / NBRC 15346 / NCIMB 9279 / VKM B-1422 / R1) protein is Large ribosomal subunit protein bL20 (rplT).